Consider the following 241-residue polypeptide: Proteasome subunit alpha type-5 (241 aa).

Residue Met1 is modified to N-acetylmethionine. At Ser16 the chain carries Phosphoserine. Thr55 carries the phosphothreonine modification. Phosphoserine occurs at positions 56 and 63. Ser198 is a glycosylation site (O-linked (GlcNAc) serine).

The protein belongs to the peptidase T1A family. The 26S proteasome consists of a 20S proteasome core and two 19S regulatory subunits. The 20S proteasome core is a barrel-shaped complex made of 28 subunits that are arranged in four stacked rings. The two outer rings are each formed by seven alpha subunits, and the two inner rings are formed by seven beta subunits. The proteolytic activity is exerted by three beta-subunits PSMB5, PSMB6 and PSMB7. PSMA5 interacts directly with the PSMG1-PSMG2 heterodimer which promotes 20S proteasome assembly.

The protein localises to the cytoplasm. Its subcellular location is the nucleus. Component of the 20S core proteasome complex involved in the proteolytic degradation of most intracellular proteins. This complex plays numerous essential roles within the cell by associating with different regulatory particles. Associated with two 19S regulatory particles, forms the 26S proteasome and thus participates in the ATP-dependent degradation of ubiquitinated proteins. The 26S proteasome plays a key role in the maintenance of protein homeostasis by removing misfolded or damaged proteins that could impair cellular functions, and by removing proteins whose functions are no longer required. Associated with the PA200 or PA28, the 20S proteasome mediates ubiquitin-independent protein degradation. This type of proteolysis is required in several pathways including spermatogenesis (20S-PA200 complex) or generation of a subset of MHC class I-presented antigenic peptides (20S-PA28 complex). The protein is Proteasome subunit alpha type-5 (PSMA5) of Bos taurus (Bovine).